The sequence spans 429 residues: Putative F-box/kelch-repeat protein At2g21680 (429 aa).

Residues methionine 1–leucine 32 are disordered. Basic and acidic residues predominate over residues histidine 17 to asparagine 29. The F-box domain occupies glutamine 37–glycine 84. Kelch repeat units lie at residues aspartate 144–glutamate 175, threonine 176–glycine 221, lysine 222–alanine 267, methionine 269–asparagine 313, and leucine 315–lysine 359.

The sequence is that of Putative F-box/kelch-repeat protein At2g21680 from Arabidopsis thaliana (Mouse-ear cress).